A 372-amino-acid chain; its full sequence is UDP-N-acetylglucosamine--N-acetylmuramyl-(pentapeptide) pyrophosphoryl-undecaprenol N-acetylglucosamine transferase (372 aa).

UDP-N-acetyl-alpha-D-glucosamine-binding positions include 14-16 (TGG), asparagine 128, arginine 169, serine 201, isoleucine 257, and glutamine 302.

It belongs to the glycosyltransferase 28 family. MurG subfamily.

It is found in the cell inner membrane. It carries out the reaction di-trans,octa-cis-undecaprenyl diphospho-N-acetyl-alpha-D-muramoyl-L-alanyl-D-glutamyl-meso-2,6-diaminopimeloyl-D-alanyl-D-alanine + UDP-N-acetyl-alpha-D-glucosamine = di-trans,octa-cis-undecaprenyl diphospho-[N-acetyl-alpha-D-glucosaminyl-(1-&gt;4)]-N-acetyl-alpha-D-muramoyl-L-alanyl-D-glutamyl-meso-2,6-diaminopimeloyl-D-alanyl-D-alanine + UDP + H(+). The protein operates within cell wall biogenesis; peptidoglycan biosynthesis. Functionally, cell wall formation. Catalyzes the transfer of a GlcNAc subunit on undecaprenyl-pyrophosphoryl-MurNAc-pentapeptide (lipid intermediate I) to form undecaprenyl-pyrophosphoryl-MurNAc-(pentapeptide)GlcNAc (lipid intermediate II). The polypeptide is UDP-N-acetylglucosamine--N-acetylmuramyl-(pentapeptide) pyrophosphoryl-undecaprenol N-acetylglucosamine transferase (Bacteroides thetaiotaomicron (strain ATCC 29148 / DSM 2079 / JCM 5827 / CCUG 10774 / NCTC 10582 / VPI-5482 / E50)).